Here is a 510-residue protein sequence, read N- to C-terminus: 2,3-bisphosphoglycerate-independent phosphoglycerate mutase (510 aa).

Residues aspartate 13 and serine 63 each contribute to the Mn(2+) site. Serine 63 functions as the Phosphoserine intermediate in the catalytic mechanism. Substrate is bound by residues histidine 124, 154 to 155 (RD), arginine 186, arginine 192, 262 to 265 (RADR), and lysine 334. Positions 401, 405, 442, 443, and 461 each coordinate Mn(2+).

It belongs to the BPG-independent phosphoglycerate mutase family. In terms of assembly, monomer. Mn(2+) serves as cofactor.

The catalysed reaction is (2R)-2-phosphoglycerate = (2R)-3-phosphoglycerate. The protein operates within carbohydrate degradation; glycolysis; pyruvate from D-glyceraldehyde 3-phosphate: step 3/5. Catalyzes the interconversion of 2-phosphoglycerate and 3-phosphoglycerate. The sequence is that of 2,3-bisphosphoglycerate-independent phosphoglycerate mutase from Vibrio parahaemolyticus serotype O3:K6 (strain RIMD 2210633).